The chain runs to 27 residues: CD59 glycoprotein (27 aa).

Disulfide bonds link C3-C25 and C6-C12. Residue N17 is glycosylated (N-linked (GlcNAc...) asparagine).

Interacts with T-cell surface antigen CD2. In terms of processing, N- and O-glycosylated. In terms of tissue distribution, expressed in erythrocytes and lymphocytes. Not detected in platelets.

The protein localises to the cell membrane. It is found in the secreted. In terms of biological role, potent inhibitor of the complement membrane attack complex (MAC) action, which protects self-cells from damage during complement activation. Acts by binding to the beta-haipins of C8 (C8A and C8B) components of the assembling MAC, forming an intermolecular beta-sheet that prevents incorporation of the multiple copies of C9 required for complete formation of the osmolytic pore. The protein is CD59 glycoprotein of Ovis aries (Sheep).